We begin with the raw amino-acid sequence, 199 residues long: Recombination protein RecR (199 aa).

A C4-type zinc finger spans residues 58-73; that stretch reads CSVCGNLTDTDVCPLC. Residues 81-176 form the Toprim domain; it reads SVICVVEDPR…KTTRIAHGIP (96 aa).

Belongs to the RecR family.

May play a role in DNA repair. It seems to be involved in an RecBC-independent recombinational process of DNA repair. It may act with RecF and RecO. In Acetivibrio thermocellus (strain ATCC 27405 / DSM 1237 / JCM 9322 / NBRC 103400 / NCIMB 10682 / NRRL B-4536 / VPI 7372) (Clostridium thermocellum), this protein is Recombination protein RecR.